Here is a 262-residue protein sequence, read N- to C-terminus: Acyl-[acyl-carrier-protein]--UDP-N-acetylglucosamine O-acyltransferase (262 aa).

This sequence belongs to the transferase hexapeptide repeat family. LpxA subfamily. In terms of assembly, homotrimer.

The protein localises to the cytoplasm. It catalyses the reaction a (3R)-hydroxyacyl-[ACP] + UDP-N-acetyl-alpha-D-glucosamine = a UDP-3-O-[(3R)-3-hydroxyacyl]-N-acetyl-alpha-D-glucosamine + holo-[ACP]. It functions in the pathway glycolipid biosynthesis; lipid IV(A) biosynthesis; lipid IV(A) from (3R)-3-hydroxytetradecanoyl-[acyl-carrier-protein] and UDP-N-acetyl-alpha-D-glucosamine: step 1/6. Its function is as follows. Involved in the biosynthesis of lipid A, a phosphorylated glycolipid that anchors the lipopolysaccharide to the outer membrane of the cell. In Yersinia pseudotuberculosis serotype O:1b (strain IP 31758), this protein is Acyl-[acyl-carrier-protein]--UDP-N-acetylglucosamine O-acyltransferase.